The following is a 71-amino-acid chain: Small ribosomal subunit protein bS21 (71 aa).

Over residues 50–59 (AAAVKRHAKK) the composition is skewed to basic residues. Residues 50–71 (AAAVKRHAKKVQREQRRAVRLY) form a disordered region. Positions 60-71 (VQREQRRAVRLY) are enriched in basic and acidic residues.

The protein belongs to the bacterial ribosomal protein bS21 family.

The protein is Small ribosomal subunit protein bS21 of Pseudomonas entomophila (strain L48).